We begin with the raw amino-acid sequence, 565 residues long: NAD-dependent malic enzyme (565 aa).

The Proton donor role is filled by Y104. Residue R157 coordinates NAD(+). K175 serves as the catalytic Proton acceptor. 3 residues coordinate a divalent metal cation: E246, D247, and D270. D270 and N418 together coordinate NAD(+).

This sequence belongs to the malic enzymes family. As to quaternary structure, homotetramer. Requires Mg(2+) as cofactor. Mn(2+) serves as cofactor.

It catalyses the reaction (S)-malate + NAD(+) = pyruvate + CO2 + NADH. The catalysed reaction is oxaloacetate + H(+) = pyruvate + CO2. The protein is NAD-dependent malic enzyme of Erwinia tasmaniensis (strain DSM 17950 / CFBP 7177 / CIP 109463 / NCPPB 4357 / Et1/99).